A 43-amino-acid polypeptide reads, in one-letter code: Protein PsbN (43 aa).

Residues 5 to 27 (TLVAISISGLLVSFTGYALYTAF) traverse the membrane as a helical segment.

This sequence belongs to the PsbN family.

It localises to the plastid. It is found in the chloroplast thylakoid membrane. In terms of biological role, may play a role in photosystem I and II biogenesis. The polypeptide is Protein PsbN (Houttuynia cordata (Chameleon plant)).